We begin with the raw amino-acid sequence, 326 residues long: Pyruvate dehydrogenase E1 component subunit beta (326 aa).

E60 provides a ligand contact to thiamine diphosphate. K(+) is bound by residues I113, A161, I162, and N166.

In terms of assembly, heterodimer of an alpha and a beta chain. Thiamine diphosphate is required as a cofactor.

It localises to the plastid. The protein resides in the chloroplast. The enzyme catalyses N(6)-[(R)-lipoyl]-L-lysyl-[protein] + pyruvate + H(+) = N(6)-[(R)-S(8)-acetyldihydrolipoyl]-L-lysyl-[protein] + CO2. In terms of biological role, the pyruvate dehydrogenase complex catalyzes the overall conversion of pyruvate to acetyl-CoA and CO(2). It contains multiple copies of three enzymatic components: pyruvate dehydrogenase (E1), dihydrolipoamide acetyltransferase (E2) and lipoamide dehydrogenase (E3). This chain is Pyruvate dehydrogenase E1 component subunit beta (pdhB), found in Chaetosphaeridium globosum (Charophycean green alga).